Reading from the N-terminus, the 420-residue chain is Tyrosine--tRNA ligase (420 aa).

Tyrosine 33 is a binding site for L-tyrosine. Positions proline 38–histidine 47 match the 'HIGH' region motif. L-tyrosine is bound by residues tyrosine 167 and glutamine 171. The 'KMSKS' region signature appears at lysine 227–threonine 231. Lysine 230 is an ATP binding site. The S4 RNA-binding domain maps to leucine 353–valine 419.

This sequence belongs to the class-I aminoacyl-tRNA synthetase family. TyrS type 1 subfamily. In terms of assembly, homodimer.

Its subcellular location is the cytoplasm. It catalyses the reaction tRNA(Tyr) + L-tyrosine + ATP = L-tyrosyl-tRNA(Tyr) + AMP + diphosphate + H(+). Its function is as follows. Catalyzes the attachment of tyrosine to tRNA(Tyr) in a two-step reaction: tyrosine is first activated by ATP to form Tyr-AMP and then transferred to the acceptor end of tRNA(Tyr). The protein is Tyrosine--tRNA ligase of Anaeromyxobacter dehalogenans (strain 2CP-1 / ATCC BAA-258).